Reading from the N-terminus, the 401-residue chain is Stearoyl-[acyl-carrier-protein] 9-desaturase 3, chloroplastic (401 aa).

Residues 1–31 (MSMALLLTSPAMKQKPAVITSPRRGSSPSRR) are disordered. The N-terminal 35 residues, 1–35 (MSMALLLTSPAMKQKPAVITSPRRGSSPSRRLRVS), are a transit peptide targeting the chloroplast. Positions 140, 178, 181, 231, 264, and 267 each coordinate Fe cation.

This sequence belongs to the fatty acid desaturase type 2 family. In terms of assembly, homodimer. The cofactor is Fe(2+). Ubiquitously expressed with a preference in leaves, flowers and stems.

Its subcellular location is the plastid. The protein resides in the chloroplast. It carries out the reaction octadecanoyl-[ACP] + 2 reduced [2Fe-2S]-[ferredoxin] + O2 + 2 H(+) = (9Z)-octadecenoyl-[ACP] + 2 oxidized [2Fe-2S]-[ferredoxin] + 2 H2O. It participates in lipid metabolism; fatty acid metabolism. In terms of biological role, converts stearoyl-ACP to oleoyl-ACP by introduction of a cis double bond between carbons 9 and 10 of the acyl chain. Also able to convert palmitoyl-ACP to palmitoleoyl-ACP at the C9 position. Exhibits delta-9 palmitoyl-[acyl-carrier-protein] desaturase (PAD) activity. Involved in omega-7 monounsaturated fatty acid biosynthesis, especially in the endosperm oil. In Arabidopsis thaliana (Mouse-ear cress), this protein is Stearoyl-[acyl-carrier-protein] 9-desaturase 3, chloroplastic (S-ACP-DES3).